Reading from the N-terminus, the 655-residue chain is Putative phagocytic receptor 1c (655 aa).

The first 20 residues, 1 to 20 (MLNIIVVLLLLFFSNNVIDS), serve as a signal peptide directing secretion. A compositionally biased stretch (low complexity) spans 146 to 173 (SNSKSSEITSPPSSPSSSSSSSSSPSSS). The segment at 146–185 (SNSKSSEITSPPSSPSSSSSSSSSPSSSIEEEDDDDTEND) is disordered. The segment covering 174–183 (IEEEDDDDTE) has biased composition (acidic residues). The next 9 membrane-spanning stretches (helical) occupy residues 300–320 (IDII…AIIL), 359–379 (FSII…LMVF), 387–407 (IATP…TGIF), 428–448 (SVIT…IGYF), 461–481 (IGTV…CSLL), 518–538 (MILG…FFLS), 550–570 (LSFA…NMII), 587–607 (LLGP…FGIT), and 619–639 (FMFS…IGFL).

Belongs to the nonaspanin (TM9SF) (TC 9.A.2) family.

The protein localises to the membrane. This chain is Putative phagocytic receptor 1c (phg1c), found in Dictyostelium discoideum (Social amoeba).